Here is a 247-residue protein sequence, read N- to C-terminus: Probable enoyl-CoA hydratase echA6 (247 aa).

The protein belongs to the enoyl-CoA hydratase/isomerase family.

It catalyses the reaction a (3S)-3-hydroxyacyl-CoA = a (2E)-enoyl-CoA + H2O. The enzyme catalyses a 4-saturated-(3S)-3-hydroxyacyl-CoA = a (3E)-enoyl-CoA + H2O. In terms of biological role, could possibly oxidize fatty acids using specific components. This Mycobacterium leprae (strain TN) protein is Probable enoyl-CoA hydratase echA6 (echA6).